The sequence spans 395 residues: Protein pelota (395 aa).

The PGF motif motif lies at 210–212 (PGF). Residues 371-395 (PELEDSDDDDDEDGAAGGVADSDSD) form a disordered region. Residues 372 to 384 (ELEDSDDDDDEDG) are compositionally biased toward acidic residues.

This sequence belongs to the eukaryotic release factor 1 family. Pelota subfamily. In terms of assembly, component of the Pelota-HBS1L complex, also named Dom34-Hbs1 complex, composed of pelo and HBS1. Interacts with Pink1 and Cnot4; the interaction with Cnot4 appears to be Pink1-dependent. It depends on a divalent metal cation as a cofactor. Expressed in ovaries and muscles (at protein level). Expressed throughout all development stages.

The protein localises to the nucleus. Its subcellular location is the cytoplasm. Its function is as follows. Component of the Pelota-HBS1L complex, a complex that recognizes stalled ribosomes and triggers the No-Go Decay (NGD) pathway. In the Pelota-HBS1L complex, pelo recognizes ribosomes stalled at the 3' end of an mRNA and engages stalled ribosomes by destabilizing mRNA in the mRNA channel. Following ribosome-binding, the Pelota-HBS1L complex promotes recruitment of pix, which drives the disassembly of stalled ribosomes, followed by degradation of damaged mRNAs as part of the NGD pathway. Required prior to the first meiotic division for spindle formation and nuclear envelope breakdown during spermatogenesis. Together with HBS1, promotes spermatid individualization during spermatogenesis. Required for ovarian germ line stem cell self-renewal and oocyte development during oogenesis. Together with HSB1, required for transposon silencing in the ovary and testis. As part of the Pink1-regulated signaling, is recruited to damaged mitochondrial and is required for recruitment of autophagy receptors and induction of mitophagy. Required for normal eye patterning and for mitotic divisions in the ovary. This chain is Protein pelota (pelo), found in Drosophila melanogaster (Fruit fly).